A 160-amino-acid chain; its full sequence is Thebaine synthase 2 (160 aa).

S74 contributes to the thebaine binding site. Catalysis depends on H89, which acts as the Proton acceptor. Residue T105 coordinates thebaine.

Belongs to the MLP family. Homodimer (allosteric) and oligomers. As to expression, expressed in poppy latex.

The enzyme catalyses (7S)-O-acetylsalutaridinol = thebaine + acetate + H(+). It participates in alkaloid biosynthesis; morphine biosynthesis. Its activity is regulated as follows. Slightly inhibited by salutaridine and (7S)-salutaridinol. Functionally, catalyzes the formation of thebaine from (7S)-salutaridinol 7-O-acetate at the expense of labile hydroxylated by-products, which are preferentially produced by spontaneous allylic elimination. No visible activity toward (7S)-salutaridinol (at pH 7). This chain is Thebaine synthase 2, found in Papaver somniferum (Opium poppy).